Here is a 64-residue protein sequence, read N- to C-terminus: Large ribosomal subunit protein bL35 (64 aa).

It belongs to the bacterial ribosomal protein bL35 family.

The sequence is that of Large ribosomal subunit protein bL35 from Mycoplasmopsis pulmonis (strain UAB CTIP) (Mycoplasma pulmonis).